We begin with the raw amino-acid sequence, 630 residues long: 1-deoxy-D-xylulose-5-phosphate synthase (630 aa).

Thiamine diphosphate is bound by residues His-72 and 113–115 (GHS). Asp-144 contacts Mg(2+). Thiamine diphosphate contacts are provided by residues 145 to 146 (GA), Asn-173, Tyr-284, and Glu-367. Asn-173 contacts Mg(2+).

Belongs to the transketolase family. DXPS subfamily. Homodimer. It depends on Mg(2+) as a cofactor. Thiamine diphosphate is required as a cofactor.

The catalysed reaction is D-glyceraldehyde 3-phosphate + pyruvate + H(+) = 1-deoxy-D-xylulose 5-phosphate + CO2. It participates in metabolic intermediate biosynthesis; 1-deoxy-D-xylulose 5-phosphate biosynthesis; 1-deoxy-D-xylulose 5-phosphate from D-glyceraldehyde 3-phosphate and pyruvate: step 1/1. Catalyzes the acyloin condensation reaction between C atoms 2 and 3 of pyruvate and glyceraldehyde 3-phosphate to yield 1-deoxy-D-xylulose-5-phosphate (DXP). This chain is 1-deoxy-D-xylulose-5-phosphate synthase, found in Geobacillus sp. (strain WCH70).